We begin with the raw amino-acid sequence, 687 residues long: Mu-like prophage FluMu transposase A (687 aa).

Residues 8-74 (THYSVYELAN…ELLLKTTPEQ (67 aa)) enclose the HTH Mu-type domain. A DNA-binding region (H-T-H motif) is located at residues 398–417 (PIERAFSHGGLGDYVDKHLL).

Functionally, this transposase is essential for integration, replication-transposition, and excision of Mu-like viral DNA. This Haemophilus influenzae (strain ATCC 51907 / DSM 11121 / KW20 / Rd) protein is Mu-like prophage FluMu transposase A.